Here is a 72-residue protein sequence, read N- to C-terminus: DNA-directed RNA polymerase subunit epsilon (72 aa).

This sequence belongs to the RNA polymerase subunit epsilon family. RNAP is composed of a core of 2 alpha, a beta and a beta' subunit. The core is associated with a delta subunit, and at least one of epsilon or omega. When a sigma factor is associated with the core the holoenzyme is formed, which can initiate transcription.

It carries out the reaction RNA(n) + a ribonucleoside 5'-triphosphate = RNA(n+1) + diphosphate. A non-essential component of RNA polymerase (RNAP). In Staphylococcus aureus (strain JH1), this protein is DNA-directed RNA polymerase subunit epsilon.